The chain runs to 268 residues: tRNA pseudouridine synthase A (268 aa).

Asp-52 (nucleophile) is an active-site residue. Position 110 (Tyr-110) interacts with substrate.

It belongs to the tRNA pseudouridine synthase TruA family. As to quaternary structure, homodimer.

The enzyme catalyses uridine(38/39/40) in tRNA = pseudouridine(38/39/40) in tRNA. Functionally, formation of pseudouridine at positions 38, 39 and 40 in the anticodon stem and loop of transfer RNAs. The protein is tRNA pseudouridine synthase A of Prochlorococcus marinus (strain MIT 9312).